A 110-amino-acid polypeptide reads, in one-letter code: Large ribosomal subunit protein uL22 (110 aa).

The protein belongs to the universal ribosomal protein uL22 family. Part of the 50S ribosomal subunit.

Its function is as follows. This protein binds specifically to 23S rRNA; its binding is stimulated by other ribosomal proteins, e.g. L4, L17, and L20. It is important during the early stages of 50S assembly. It makes multiple contacts with different domains of the 23S rRNA in the assembled 50S subunit and ribosome. In terms of biological role, the globular domain of the protein is located near the polypeptide exit tunnel on the outside of the subunit, while an extended beta-hairpin is found that lines the wall of the exit tunnel in the center of the 70S ribosome. In Marinomonas sp. (strain MWYL1), this protein is Large ribosomal subunit protein uL22.